A 252-amino-acid polypeptide reads, in one-letter code: 5'-nucleotidase SurE (252 aa).

A divalent metal cation contacts are provided by Asp8, Asp9, Ser39, and Asn91.

It belongs to the SurE nucleotidase family. The cofactor is a divalent metal cation.

It localises to the cytoplasm. It carries out the reaction a ribonucleoside 5'-phosphate + H2O = a ribonucleoside + phosphate. Its function is as follows. Nucleotidase that shows phosphatase activity on nucleoside 5'-monophosphates. The sequence is that of 5'-nucleotidase SurE from Bordetella bronchiseptica (strain ATCC BAA-588 / NCTC 13252 / RB50) (Alcaligenes bronchisepticus).